We begin with the raw amino-acid sequence, 176 residues long: Endoribonuclease YbeY (176 aa).

Zn(2+)-binding residues include His-117, His-121, and His-127.

It belongs to the endoribonuclease YbeY family. Zn(2+) is required as a cofactor.

It localises to the cytoplasm. Its function is as follows. Single strand-specific metallo-endoribonuclease involved in late-stage 70S ribosome quality control and in maturation of the 3' terminus of the 16S rRNA. The chain is Endoribonuclease YbeY from Methylocella silvestris (strain DSM 15510 / CIP 108128 / LMG 27833 / NCIMB 13906 / BL2).